A 115-amino-acid chain; its full sequence is DNA-binding protein PYRAB09250 (115 aa).

Belongs to the PDCD5 family.

The protein is DNA-binding protein PYRAB09250 of Pyrococcus abyssi (strain GE5 / Orsay).